The chain runs to 485 residues: uncharacterized protein (485 aa).

Positions 151 to 201 (IKAPTNNSQSGDGNGGTNNDNLLGTFDIREKSNGKKGESNGKQGNGQDKKT) are disordered. Residues 155–174 (TNNSQSGDGNGGTNNDNLLG) are compositionally biased toward low complexity. Residues 177–189 (DIREKSNGKKGES) are compositionally biased toward basic and acidic residues.

This sequence belongs to the MG185/MG260 family.

This is an uncharacterized protein from Mycoplasma pneumoniae (strain ATCC 29342 / M129 / Subtype 1) (Mycoplasmoides pneumoniae).